A 497-amino-acid chain; its full sequence is Probable malate:quinone oxidoreductase (497 aa).

The protein belongs to the MQO family. FAD is required as a cofactor.

The catalysed reaction is (S)-malate + a quinone = a quinol + oxaloacetate. It functions in the pathway carbohydrate metabolism; tricarboxylic acid cycle; oxaloacetate from (S)-malate (quinone route): step 1/1. In Hahella chejuensis (strain KCTC 2396), this protein is Probable malate:quinone oxidoreductase.